A 358-amino-acid polypeptide reads, in one-letter code: MPNPSCTSSPGPLPEEIRNLLADVETFVADTLKGENLSKKAKEKRESLIKKIKDVKSVYLQEFQDKGDAEDGDEYDDPFAGPADTISLASERYDKDDDGPSDGNQFPPIAAQDLPFVIKAGYLEKRRKDHSFLGFEWQKRWCALSKTVFYYYGSDKDKQQKGEFAIDGYDVRMNNTLRKDGKKDCCFEICAPDKRIYQFTAASPKDAEEWVQQLKFILQDLGSDVIPEDDEERGELYDDVDHPAAVSSPQRSQPIDDEIYEELPEEEEDTASVKMDEQGKGSRDSVHHTSGDKSTDYANFYQGLWDCTGALSDELSFKRGDVIYILSKEYNRYGWWVGEMKGAIGLVPKAYLMEMYDI.

Phosphoserine is present on residues S5 and S9. Residues 14–64 (PEEIRNLLADVETFVADTLKGENLSKKAKEKRESLIKKIKDVKSVYLQEFQ) are homodimerization. Y75 is modified (phosphotyrosine). Phosphoserine occurs at positions 87 and 90. In terms of domain architecture, PH spans 116–219 (FVIKAGYLEK…WVQQLKFILQ (104 aa)). 2 positions are modified to phosphotyrosine: Y151 and Y197. Phosphoserine is present on S223. The disordered stretch occupies residues 232 to 292 (ERGELYDDVD…RDSVHHTSGD (61 aa)). Residues 255 to 270 (IDDEIYEELPEEEEDT) show a composition bias toward acidic residues. Y260 is subject to Phosphotyrosine; by FYN. Phosphoserine occurs at positions 272, 282, and 285. A compositionally biased stretch (basic and acidic residues) spans 274–292 (KMDEQGKGSRDSVHHTSGD). The SH3 domain maps to 296–357 (DYANFYQGLW…PKAYLMEMYD (62 aa)).

Belongs to the SKAP family. In terms of assembly, interacts with LAT, GRB2, PTK2B and PRAM1. Homodimer. Interacts with FYB1, which is required for SKAP2 protein stability. Interacts with PTPNS1. Part of a complex consisting of SKAP2, FYB1 and PTPNS1. Part of a complex consisting of SKAP2, FYB1 and PIRB. May interact with actin. May interact with FYN, HCK and LYN. Interacts with FASLG. Post-translationally, dephosphorylated on Tyr-75 by PTPN22. Phosphorylated by FYN on Tyr-260. In case of infection with Y.pseudotuberculosis, dephosphorylated by bacterial phosphatase yopH. In terms of tissue distribution, expressed in kidney, lung, liver, spleen, bone marrow and testis. Present in T-cells, B-cells, and all cells of the myelomonocytic lineage. Present in all brain regions, with highest levels in neurons from the Purkinje cell layer, hippocampal gyrus, cortex and substantia nigra (at protein level).

It localises to the cytoplasm. Functionally, may be involved in B-cell and macrophage adhesion processes. In B-cells, may act by coupling the B-cell receptor (BCR) to integrin activation. May play a role in src signaling pathway. This is Src kinase-associated phosphoprotein 2 (Skap2) from Mus musculus (Mouse).